Reading from the N-terminus, the 685-residue chain is Exocyst complex component 8 (685 aa).

Residues 151–251 (YLVYNGDLTE…WLEILEQTKK (101 aa)) enclose the PH domain. Over residues 254 to 263 (ALNEKQKQEE) the composition is skewed to basic and acidic residues. The interval 254–273 (ALNEKQKQEETTPQLPVVPE) is disordered.

It belongs to the EXO84 family. As to quaternary structure, the exocyst complex is composed of exoc1, exoc2, exoc3, exoc4, exoc5, exoc6, exoc7 and exoc8.

The protein resides in the cytoplasm. It is found in the perinuclear region. The protein localises to the cell projection. It localises to the growth cone. In terms of biological role, component of the exocyst complex involved in the docking of exocytic vesicles with fusion sites on the plasma membrane. This Xenopus laevis (African clawed frog) protein is Exocyst complex component 8 (exoc8).